A 79-amino-acid chain; its full sequence is Antimicrobial peptide ToAP2 (79 aa).

The first 23 residues, 1–23 (MQFKKQLLVIFFAYFLVVNESEA), serve as a signal peptide directing secretion. Residues 50 to 79 (SLMKRELKNLYDPYQRSVEMERLLKELPLY) constitute a propeptide that is removed on maturation.

This sequence belongs to the non-disulfide-bridged peptide (NDBP) superfamily. Medium-length antimicrobial peptide (group 3) family. Expressed by the venom gland.

The protein localises to the secreted. It localises to the target cell membrane. Functionally, antimicrobial peptide. Shows antibacterial activity against all M.massiliense bacterial strains tested. Has antifungal activity against Candida spp. and two Cryptococcus neoformans strains with MICs values ranging from 6.25 to 200 uM. Also shows an inhibitory activity on C.albicans biofilms at high concentrations. Exhibits chemotactic activity for monocytes, neutrophils, and eosinophils. Shows low cytotoxic activity and has weak hemolytic activity on human erythrocytes. In vivo, treatment of infected mice with M.massiliense reduces the bacterial load in the liver, lung, and spleen. May act by disrupting the integrity of the bacterial cell membrane. In Tityus obscurus (Amazonian scorpion), this protein is Antimicrobial peptide ToAP2.